A 185-amino-acid polypeptide reads, in one-letter code: Ribosome-recycling factor (185 aa).

The protein belongs to the RRF family.

Its subcellular location is the cytoplasm. Functionally, responsible for the release of ribosomes from messenger RNA at the termination of protein biosynthesis. May increase the efficiency of translation by recycling ribosomes from one round of translation to another. The protein is Ribosome-recycling factor of Corynebacterium diphtheriae (strain ATCC 700971 / NCTC 13129 / Biotype gravis).